We begin with the raw amino-acid sequence, 557 residues long: Formate--tetrahydrofolate ligase (557 aa).

67–74 contacts ATP; it reads TPAGEGKS.

It belongs to the formate--tetrahydrofolate ligase family.

The enzyme catalyses (6S)-5,6,7,8-tetrahydrofolate + formate + ATP = (6R)-10-formyltetrahydrofolate + ADP + phosphate. The protein operates within one-carbon metabolism; tetrahydrofolate interconversion. The protein is Formate--tetrahydrofolate ligase of Latilactobacillus sakei subsp. sakei (strain 23K) (Lactobacillus sakei subsp. sakei).